We begin with the raw amino-acid sequence, 299 residues long: Large ribosomal subunit protein uL18 (299 aa).

This sequence belongs to the universal ribosomal protein uL18 family. As to quaternary structure, component of the large ribosomal subunit (LSU).

The protein resides in the cytoplasm. The protein localises to the nucleus. Component of the ribosome, a large ribonucleoprotein complex responsible for the synthesis of proteins in the cell. The small ribosomal subunit (SSU) binds messenger RNAs (mRNAs) and translates the encoded message by selecting cognate aminoacyl-transfer RNA (tRNA) molecules. The large subunit (LSU) contains the ribosomal catalytic site termed the peptidyl transferase center (PTC), which catalyzes the formation of peptide bonds, thereby polymerizing the amino acids delivered by tRNAs into a polypeptide chain. The nascent polypeptides leave the ribosome through a tunnel in the LSU and interact with protein factors that function in enzymatic processing, targeting, and the membrane insertion of nascent chains at the exit of the ribosomal tunnel. In Bombyx mori (Silk moth), this protein is Large ribosomal subunit protein uL18 (RpL5).